The sequence spans 654 residues: Transcription factor E2-alpha (654 aa).

The 9aaTAD motif lies at 19-27; it reads LLDFSMMFP. A disordered region spans residues 31–103; that stretch reads TNGKGRPASL…LGPGLGGKSG (73 aa). The segment covering 55-68 has biased composition (low complexity); sequence SSGSWGSGDQSSSS. Positions 69–79 are enriched in polar residues; sequence FDPSRTFSEGT. Positions 84–94 are enriched in low complexity; sequence SHSSLSSSTFL. A phosphoserine mark is found at Ser134 and Ser139. 4 disordered regions span residues 135 to 205, 239 to 268, 292 to 329, and 343 to 385; these read PGPL…SAKT, MLGG…FGGL, SFSS…GSSG, and DHSS…YDGG. Over residues 147-156 the composition is skewed to low complexity; the sequence is SQYYPSYSGS. A Nuclear localization signal motif is present at residues 170–176; the sequence is PKKVRKV. Residues 256-268 show a composition bias toward low complexity; sequence VGSSGSSSTFGGL. The segment covering 343–354 has biased composition (low complexity); the sequence is DHSSNNFSSSPS. Thr355 is modified (phosphothreonine). Ser359 carries the phosphoserine modification. Arg371 is subject to Omega-N-methylarginine. Ser379 carries the post-translational modification Phosphoserine. A leucine-zipper region spans residues 389–425; sequence LQSKIEDHLDEAIHVLRSHAVGTAGDMHTLLPGHGAL. The tract at residues 461–552 is disordered; that stretch reads NHAALPSQPG…KAEREKERRV (92 aa). Lys498 participates in a covalent cross-link: Glycyl lysine isopeptide (Lys-Gly) (interchain with G-Cter in SUMO2). Residues 512-523 are compositionally biased toward basic and acidic residues; that stretch reads DHSEEEKKELKA. Ser529 is modified (phosphoserine). A Phosphothreonine modification is found at Asp531. Basic and acidic residues predominate over residues 542-552; it reads QKAEREKERRV. The bHLH domain maps to 549 to 602; sequence ERRVANNARERLRVRDINEAFKELGRMCQLHLNSEKPQTKLLILHQAVSVILNL. Lys625 is covalently cross-linked (Glycyl lysine isopeptide (Lys-Gly) (interchain with G-Cter in SUMO2)). Residues 633 to 654 are disordered; that stretch reads PQMVLSAPHPGLSEAHNPAGHM.

Homodimer. Heterodimer; efficient DNA binding requires dimerization with another bHLH protein. Forms a heterodimer with ASH1, TWIST1 and TWIST2. Forms a heterodimer with MYOG; heterodimerization enhances MYOG DNA-binding and transcriptional activities. Forms a heterodimer with NEUROD1; the heterodimer is inhibited in presence of ID2, but not NR0B2, to E-box element. Forms a heterodimer with TCF15; the heterodimer binds E-box element. Forms a heterodimer with ATOH8; repress transcription of TCF3 and TCF3/NEUROG3 dimer-induced transactivation of E box-dependent promoters. Component of a nuclear TAL-1 complex composed at least of CBFA2T3, LDB1, TAL1 and TCF3. Interacts with NEUROD2, PTF1A and TGFB1I1. Interacts with EP300 and UBE2I. Interacts with BHLHA9. Interacts with ASB2; the interaction is mediated by SKP2 and targets TCF3 for Notch-induced proteasomal degradation. In terms of assembly, forms a heterodimer with ATOH7; required for ATOH7 DNA-binding. As to quaternary structure, interacts with RALGAPA1 and FIGLA. Post-translationally, phosphorylated following NGF stimulation. In terms of processing, undergoes Notch-induced ubiquitination and subsequent proteasomal degradation which is mediated by ASB1 or ASB2, the substrate-recognition components of probable ECS E3 ubiquitin-protein ligase complexes.

The protein resides in the nucleus. Transcriptional regulator involved in the initiation of neuronal differentiation and mesenchymal to epithelial transition. Heterodimers between TCF3 and tissue-specific basic helix-loop-helix (bHLH) proteins play major roles in determining tissue-specific cell fate during embryogenesis, like muscle or early B-cell differentiation. Together with TCF15, required for the mesenchymal to epithelial transition. Dimers bind DNA on E-box motifs: 5'-CANNTG-3'. Binds to the kappa-E2 site in the kappa immunoglobulin gene enhancer. Binds to IEB1 and IEB2, which are short DNA sequences in the insulin gene transcription control region. Its function is as follows. Facilitates ATOH7 binding to DNA at the consensus sequence 5'-CAGGTG-3', and positively regulates transcriptional activity. The sequence is that of Transcription factor E2-alpha (TCF3) from Homo sapiens (Human).